A 518-amino-acid polypeptide reads, in one-letter code: Arp2/3 complex-activating protein rickA (518 aa).

Residues 310 to 518 (SAAQLQSAET…ERNAKQSQQR (209 aa)) form a disordered region. Composition is skewed to pro residues over residues 344–354 (TPPPAPPPPMP) and 382–401 (VPPPPPPPMPTGNVPPPPPV). A compositionally biased stretch (polar residues) spans 418–430 (QPRPAVDTTNLMK). A WH2 domain is found at 424–441 (DTTNLMKQIQGGFNLKKI). The span at 439-461 (KKIEYGEDGKPIPKNKEDTKETS) shows a compositional bias: basic and acidic residues. Polar residues predominate over residues 488 to 498 (GTDSGWASDVS).

As to quaternary structure, homodimer.

It localises to the cell surface. Functionally, recruits and activates the Arp2/3 complex, which in turn leads to actin polymerization, promoting Rickettsia motility during infection. This Rickettsia bellii (strain RML369-C) protein is Arp2/3 complex-activating protein rickA (rickA).